The chain runs to 219 residues: MKSFVVAPFIVAIDGPAASGKGTLARRIATHYGMPHLDTGLTYRAVAKALLDKGLPLDDEALATDAALSLDLLAMDKAVLSAHAIGEAASKVAVMPAVRRALVEAQRHFANALPSSVLDGRDIGTVVCPDAAIKLFVTASPEVRARRRFDEVLARGDTADFAEILADLKKRDERDMNRTDSPLRPAEDAHLLDTSEMSIEAAFLAAKKLIDHALAQHRG.

15–23 (GPAASGKGT) is an ATP binding site.

It belongs to the cytidylate kinase family. Type 1 subfamily.

It localises to the cytoplasm. It catalyses the reaction CMP + ATP = CDP + ADP. It carries out the reaction dCMP + ATP = dCDP + ADP. This Brucella melitensis biotype 2 (strain ATCC 23457) protein is Cytidylate kinase.